The sequence spans 188 residues: Putative manganese efflux pump MntP (188 aa).

The next 6 membrane-spanning stretches (helical) occupy residues leucine 3 to glycine 23, leucine 41 to alanine 61, serine 62 to glycine 82, leucine 107 to leucine 129, alanine 143 to glycine 163, and isoleucine 168 to glycine 188.

It belongs to the MntP (TC 9.B.29) family.

The protein localises to the cell inner membrane. Probably functions as a manganese efflux pump. The sequence is that of Putative manganese efflux pump MntP from Klebsiella pneumoniae subsp. pneumoniae (strain ATCC 700721 / MGH 78578).